The primary structure comprises 808 residues: Glycerol-3-phosphate acyltransferase (808 aa).

Positions 306–311 (HRSHMD) match the HXXXXD motif motif.

The protein belongs to the GPAT/DAPAT family.

The protein localises to the cell inner membrane. The enzyme catalyses sn-glycerol 3-phosphate + an acyl-CoA = a 1-acyl-sn-glycero-3-phosphate + CoA. Its pathway is phospholipid metabolism; CDP-diacylglycerol biosynthesis; CDP-diacylglycerol from sn-glycerol 3-phosphate: step 1/3. The polypeptide is Glycerol-3-phosphate acyltransferase (Vibrio parahaemolyticus serotype O3:K6 (strain RIMD 2210633)).